The sequence spans 207 residues: dTDP-4-dehydrorhamnose 3-epimerase (207 aa).

Substrate is bound by residues R23, D28, 47–49, and R59; that span reads QAN. Catalysis depends on H62, which acts as the Proton acceptor. Positions 72 and 119 each coordinate substrate. The Proton donor role is filled by Y132. E143 and R167 together coordinate substrate.

The protein belongs to the dTDP-4-dehydrorhamnose 3,5-epimerase family.

It functions in the pathway antibiotic biosynthesis; novobiocin biosynthesis. DTDP-6-deoxy-D-xylo-4-hexulose 3-epimerase that acts together with NovU to catalyze the formation of dTDP-4-keto-6-deoxy-5-C-methyl-L-lyxo-hexose from dTDP-4-keto-6-deoxy-D-glucose in the novobiocin biosynthesis pathway, an aminocoumarin family antibiotic that targets bacterial DNA gyrases. This is dTDP-4-dehydrorhamnose 3-epimerase from Streptomyces niveus (Streptomyces spheroides).